We begin with the raw amino-acid sequence, 383 residues long: Queuine tRNA-ribosyltransferase (383 aa).

The Proton acceptor role is filled by Asp92. Residues 92-96, Asp146, Gln190, and Gly217 contribute to the substrate site; that span reads DSGGF. Positions 248 to 254 are RNA binding; it reads GVGKPED. Asp267 serves as the catalytic Nucleophile. The interval 272-276 is RNA binding; important for wobble base 34 recognition; that stretch reads TRNAR. Cys310, Cys312, Cys315, and His341 together coordinate Zn(2+).

Belongs to the queuine tRNA-ribosyltransferase family. Homodimer. Within each dimer, one monomer is responsible for RNA recognition and catalysis, while the other monomer binds to the replacement base PreQ1. Zn(2+) is required as a cofactor.

It catalyses the reaction 7-aminomethyl-7-carbaguanine + guanosine(34) in tRNA = 7-aminomethyl-7-carbaguanosine(34) in tRNA + guanine. It participates in tRNA modification; tRNA-queuosine biosynthesis. Catalyzes the base-exchange of a guanine (G) residue with the queuine precursor 7-aminomethyl-7-deazaguanine (PreQ1) at position 34 (anticodon wobble position) in tRNAs with GU(N) anticodons (tRNA-Asp, -Asn, -His and -Tyr). Catalysis occurs through a double-displacement mechanism. The nucleophile active site attacks the C1' of nucleotide 34 to detach the guanine base from the RNA, forming a covalent enzyme-RNA intermediate. The proton acceptor active site deprotonates the incoming PreQ1, allowing a nucleophilic attack on the C1' of the ribose to form the product. After dissociation, two additional enzymatic reactions on the tRNA convert PreQ1 to queuine (Q), resulting in the hypermodified nucleoside queuosine (7-(((4,5-cis-dihydroxy-2-cyclopenten-1-yl)amino)methyl)-7-deazaguanosine). The protein is Queuine tRNA-ribosyltransferase of Psychrobacter cryohalolentis (strain ATCC BAA-1226 / DSM 17306 / VKM B-2378 / K5).